We begin with the raw amino-acid sequence, 549 residues long: MIPNNINNRKKLKLPELFKEKYGFNKKGIELRYCDGEKGMGIFSNRKFNKGEKIMKIEPYVWSVAKHAIVCDECLKNKLDLEEGKTLKRCSNCKLVYYCSTDCQTKAWKIHKQECKILSTIPSTTDKKNINTKSTTMLLRLFIKRNLELINNNNNNNNNNNNNNNNNDNHITGQYEIIDGLLNHKDIRSDNNEYKSFSSGFCSLLGEDPQLKAPIVLEYLLKLEPNCITIPRCEASSIGLYPLMLFFNHSCKPNISIINNRKELLIITNKIIEKDEELFINYSPAICYRNERLDNLKQCFFFNCKCTLCLGEEKIKSKDLYITCNINNCGGRINQEIDININNNNNNNNNNNNNSNNNNNNNNSNEEILKCYKCLKVYKGQEKDEILKKKLIIKNLQNKLSTNTDQININQEFKSLLELYCKEIHPTDPLFYEIVNKTQLFYLGNNNKFISDNELSTIYHPRYQIMIKYHLLQVQNLEYEYCRQMLDYVNTLATTSYFKDALNILTDLMSNHLSQIDFYGFNRDELLSLLYNLQHEYKNNIKTSRKIIN.

Residues 27–283 (KGIELRYCDG…KDEELFINYS (257 aa)) form the SET domain. 8 residues coordinate Zn(2+): Cys-71, Cys-74, Cys-90, Cys-93, Cys-99, Cys-103, His-111, and Cys-115. An MYND-type zinc finger spans residues 71–115 (CDECLKNKLDLEEGKTLKRCSNCKLVYYCSTDCQTKAWKIHKQEC). Positions 340-401 (NINNNNNNNN…IIKNLQNKLS (62 aa)) form a coiled coil.

It belongs to the class V-like SAM-binding methyltransferase superfamily.

Its function is as follows. Probable methyltransferase. The polypeptide is SET and MYND domain-containing protein DDB_G0277331 (Dictyostelium discoideum (Social amoeba)).